Consider the following 477-residue polypeptide: P3 protein (477 aa).

Residues 1–21 (MVLMQDKGSSQQWPGLGGEGG) are disordered. Helical transmembrane passes span 225–245 (PMLL…FLMA), 253–273 (ALAL…SYLF), 281–301 (VTLA…FLPL), 320–340 (ISKI…GVLI), 361–381 (VLLL…LAGI), 383–403 (LPIV…GYCL), 417–437 (VSIE…QLSL), and 450–470 (FIVA…HFIY).

It belongs to the bile acid:sodium symporter (BASS) (TC 2.A.28) family.

The protein localises to the membrane. The ubiquitous expression and the conservation of the sequence in distant animal species suggest that the gene codes for a protein with housekeeping functions. The sequence is that of P3 protein (SLC10A3) from Homo sapiens (Human).